The primary structure comprises 463 residues: Probable cysteine protease RD21B (463 aa).

Positions 1-21 (MGFLKLSPMILLLAMIGVSYA) are cleaved as a signal peptide. Residues 22-137 (MDMSIISYDE…DRYQARVGDA (116 aa)) constitute a propeptide, activation peptide. N92 carries an N-linked (GlcNAc...) asparagine glycan. Disulfide bonds link C159–C201, C193–C234, C292–C343, C376–C388, and C382–C403. The active site involves C162. Active-site residues include H298 and N318. A propeptide spans 354–463 (KKGQNPPNPG…FWAKSRKHIA (110 aa)) (removed in mature form). N-linked (GlcNAc...) asparagine glycosylation occurs at N415.

This sequence belongs to the peptidase C1 family. Interacts with PRN2. Interacts with WSCP.

Its function is as follows. Probable thiol protease. In Arabidopsis thaliana (Mouse-ear cress), this protein is Probable cysteine protease RD21B.